The chain runs to 212 residues: External core antigen (212 aa).

The first 19 residues, 1–19 (MQLFHLCLIISCSCPTVQA), serve as a signal peptide directing secretion. Positions 25–27 (GWL) are HBEAG. Residues 172–212 (LPETTVVRRRGRSPRRRTPSPRRRRSKSPRRRRSQSRESQC) are disordered. Basic residues predominate over residues 178–205 (VRRRGRSPRRRTPSPRRRRSKSPRRRRS). The stretch at 184–189 (SPRRRT) is one 1; half-length repeat. The interval 184 to 205 (SPRRRTPSPRRRRSKSPRRRRS) is 3 X 7 AA repeats of S-P-R-R-R-R-S. Residues 184 to 212 (SPRRRTPSPRRRRSKSPRRRRSQSRESQC) constitute a propeptide that is removed on maturation. Tandem repeats lie at residues 191-197 (SPRRRRS) and 199-205 (SPRRRRS).

It belongs to the orthohepadnavirus precore antigen family. Homodimerizes. In terms of processing, phosphorylated. Post-translationally, cleaved by host furin.

It is found in the secreted. The protein localises to the host nucleus. In terms of biological role, may regulate immune response to the intracellular capsid in acting as a T-cell tolerogen, by having an immunoregulatory effect which prevents destruction of infected cells by cytotoxic T-cells. This immune regulation may predispose to chronicity during perinatal infections and prevent severe liver injury during adult infections. The sequence is that of External core antigen from Hepatitis B virus genotype C subtype adr (isolate Japan/Nishioka/1983) (HBV-C).